Here is a 403-residue protein sequence, read N- to C-terminus: Probable tRNA sulfurtransferase (403 aa).

Positions 60-165 (QLAEERLKPI…KEGVFLSCRT (106 aa)) constitute a THUMP domain. Residues 183–184 (ML), 208–209 (HF), Arg-265, Gly-287, and Gln-296 each bind ATP.

Belongs to the ThiI family.

Its subcellular location is the cytoplasm. It catalyses the reaction [ThiI sulfur-carrier protein]-S-sulfanyl-L-cysteine + a uridine in tRNA + 2 reduced [2Fe-2S]-[ferredoxin] + ATP + H(+) = [ThiI sulfur-carrier protein]-L-cysteine + a 4-thiouridine in tRNA + 2 oxidized [2Fe-2S]-[ferredoxin] + AMP + diphosphate. The catalysed reaction is [ThiS sulfur-carrier protein]-C-terminal Gly-Gly-AMP + S-sulfanyl-L-cysteinyl-[cysteine desulfurase] + AH2 = [ThiS sulfur-carrier protein]-C-terminal-Gly-aminoethanethioate + L-cysteinyl-[cysteine desulfurase] + A + AMP + 2 H(+). It functions in the pathway cofactor biosynthesis; thiamine diphosphate biosynthesis. In terms of biological role, catalyzes the ATP-dependent transfer of a sulfur to tRNA to produce 4-thiouridine in position 8 of tRNAs, which functions as a near-UV photosensor. Also catalyzes the transfer of sulfur to the sulfur carrier protein ThiS, forming ThiS-thiocarboxylate. This is a step in the synthesis of thiazole, in the thiamine biosynthesis pathway. The sulfur is donated as persulfide by IscS. The sequence is that of Probable tRNA sulfurtransferase from Listeria monocytogenes serovar 1/2a (strain ATCC BAA-679 / EGD-e).